Consider the following 36-residue polypeptide: Probable non-specific lipid-transfer protein (36 aa).

Belongs to the plant LTP family. Phosphorylated by Ca(2+)-dependent protein kinase.

Plant non-specific lipid-transfer proteins transfer phospholipids as well as galactolipids across membranes. May play a role in wax or cutin deposition in the cell walls of expanding epidermal cells and certain secretory tissues. This is Probable non-specific lipid-transfer protein from Pinus pinea (Italian stone pine).